The primary structure comprises 166 residues: Large ribosomal subunit protein uL10 (166 aa).

This sequence belongs to the universal ribosomal protein uL10 family. In terms of assembly, part of the ribosomal stalk of the 50S ribosomal subunit. The N-terminus interacts with L11 and the large rRNA to form the base of the stalk. The C-terminus forms an elongated spine to which L12 dimers bind in a sequential fashion forming a multimeric L10(L12)X complex.

Functionally, forms part of the ribosomal stalk, playing a central role in the interaction of the ribosome with GTP-bound translation factors. This Staphylococcus carnosus (strain TM300) protein is Large ribosomal subunit protein uL10.